Here is a 122-residue protein sequence, read N- to C-terminus: Acidic phospholipase A2 5 (122 aa).

Cystine bridges form between Cys-26–Cys-115, Cys-28–Cys-44, Cys-43–Cys-95, Cys-49–Cys-122, Cys-50–Cys-88, Cys-57–Cys-81, and Cys-75–Cys-86. Ca(2+)-binding residues include Phe-27, Gly-29, and Gly-31. The active site involves His-47. Position 48 (Asp-48) interacts with Ca(2+). Asp-89 is a catalytic residue.

It belongs to the phospholipase A2 family. Group II subfamily. D49 sub-subfamily. Monomer (predominant). Non-covalently linked homodimers are also observed. Ca(2+) is required as a cofactor. Expressed by the venom gland.

The protein localises to the secreted. It carries out the reaction a 1,2-diacyl-sn-glycero-3-phosphocholine + H2O = a 1-acyl-sn-glycero-3-phosphocholine + a fatty acid + H(+). Its activity is regulated as follows. Preincubation with heparin slightly increase the enzymatic activity. Snake venom phospholipase A2 (PLA2) that inhibits platelet aggregation induced by ADP, arachidonic acid and PAF. Acts in a enzymatic independent manner on a proteinase-activated receptor (PAR1, F2R) to evoke calcium release through the inositol 1,4,5-trisphosphate receptor (ITPR1, IP3R) and induces mouse aorta contraction. PAR1, phospholipase C and IP3R inhibitors suppress PA2-induced aorta contraction. PLA2 catalyzes the calcium-dependent hydrolysis of the 2-acyl groups in 3-sn-phosphoglycerides. The chain is Acidic phospholipase A2 5 from Trimeresurus stejnegeri (Chinese green tree viper).